The primary structure comprises 156 residues: Arginine repressor (156 aa).

Belongs to the ArgR family.

It is found in the cytoplasm. It functions in the pathway amino-acid biosynthesis; L-arginine biosynthesis [regulation]. Its function is as follows. Regulates arginine biosynthesis genes. In Erwinia tasmaniensis (strain DSM 17950 / CFBP 7177 / CIP 109463 / NCPPB 4357 / Et1/99), this protein is Arginine repressor.